The following is a 349-amino-acid chain: Secondary metabolism regulator LAE1 (349 aa).

The segment at 1–46 is disordered; the sequence is MSSRNAPSGCVAPSPATAAPPSPTNLRLTVGQSGSESANEPGGEPE. Polar residues predominate over residues 25–38; sequence NLRLTVGQSGSESA.

This sequence belongs to the methyltransferase superfamily. LaeA methyltransferase family. Component of the heterotrimeric velvet complex composed of LAE1, VEL1 and VEL2; VEL1 acting as a bridging protein between LAE1 and VEL2.

It is found in the nucleus. The enzyme catalyses L-methionyl-[protein] + S-adenosyl-L-methionine = S-methyl-L-methionyl-[protein] + S-adenosyl-L-homocysteine. Its function is as follows. Methyltransferase that performs automethylation. No other methyl-accepting substrate has been identified yet. Component of the velvet transcription factor complex that acts as a global regulator for secondary metabolite gene expression. Controls the expression of the gamma-pentyl-pyrone gene clusters. Required for the expression of cellulase. Regulates asexual sporulation (conidiation) by environmental stimuli such as light and/or mechanical injury. Required for oxidative stress tolerance. Also plays a role in defense and parasitism on other fungi. The polypeptide is Secondary metabolism regulator LAE1 (Hypocrea atroviridis (strain ATCC 20476 / IMI 206040) (Trichoderma atroviride)).